The chain runs to 193 residues: Large ribosomal subunit protein uL5 (193 aa).

The protein belongs to the universal ribosomal protein uL5 family. In terms of assembly, part of the 50S ribosomal subunit; part of the 5S rRNA/L5/L18/L25 subcomplex. Contacts the 5S rRNA and the P site tRNA. Forms a bridge to the 30S subunit in the 70S ribosome.

Its function is as follows. This is one of the proteins that bind and probably mediate the attachment of the 5S RNA into the large ribosomal subunit, where it forms part of the central protuberance. In the 70S ribosome it contacts protein S13 of the 30S subunit (bridge B1b), connecting the 2 subunits; this bridge is implicated in subunit movement. Contacts the P site tRNA; the 5S rRNA and some of its associated proteins might help stabilize positioning of ribosome-bound tRNAs. The polypeptide is Large ribosomal subunit protein uL5 (Renibacterium salmoninarum (strain ATCC 33209 / DSM 20767 / JCM 11484 / NBRC 15589 / NCIMB 2235)).